Here is a 154-residue protein sequence, read N- to C-terminus: Hemiasterlin resistant protein 1 (154 aa).

Disordered stretches follow at residues 1-64 (MVRR…PGLM) and 86-109 (GMFT…PAGA). 3 stretches are compositionally biased toward low complexity: residues 7 to 28 (ASPS…SSFA), 48 to 57 (TPMGAPMGAP), and 96 to 109 (AEQA…PAGA). Positions 116 to 154 (SQPCEFEWRQFVDCAQNQSDVSLCNGFNDIFKQCKARYA) constitute a CHCH domain. 2 short sequence motifs (cx9C motif) span residues 119-129 (CEFEWRQFVDC) and 139-149 (CNGFNDIFKQC). 2 cysteine pairs are disulfide-bonded: cysteine 119–cysteine 149 and cysteine 129–cysteine 139.

The sequence is that of Hemiasterlin resistant protein 1 (har-1) from Caenorhabditis elegans.